A 330-amino-acid chain; its full sequence is MEERYDVTIIGGGPAGMFAAFYCGLHQLKAQLIEALPQLGGQPAALYPEKRVWDVAGKAGVTGQELADDLAAQIEVAPVDQFLGEKVTDVVKEDDGSFTIHSAKRTSTSKSIVIAMGNGAFSPRKLALPGAEELEGKQVRYFANHKEDFKDQRVAVLGGGDAAIDMALMLEDVAEQVYLVHRRDAFRALEHTVAQLEASTIEKLTPYLPKDLTVNADQSVTLNLKKMRADEERPLEVDKVLVNYGFTSNNAALKDWSLDLASERGQIKVDQTMKTSVPGVYAIGDGVVYEGKVALIATGFGEAPTAITNLAKELYPDKRMAIHSSSMGIG.

The FAD site is built by glutamate 34, glutamine 42, tyrosine 47, valine 87, phenylalanine 121, aspartate 285, and serine 325.

Belongs to the ferredoxin--NADP reductase type 2 family. As to quaternary structure, homodimer. It depends on FAD as a cofactor.

It carries out the reaction 2 reduced [2Fe-2S]-[ferredoxin] + NADP(+) + H(+) = 2 oxidized [2Fe-2S]-[ferredoxin] + NADPH. The sequence is that of Ferredoxin--NADP reductase from Limosilactobacillus fermentum (strain NBRC 3956 / LMG 18251) (Lactobacillus fermentum).